The primary structure comprises 788 residues: Serine/threonine-protein kinase MARK2 (788 aa).

The interval 1–46 is disordered; it reads MSSARTPLPTLNERDTEQPTLGHLDSKPSSKSNMIRGRNSATSADE. Positions 27–45 are enriched in polar residues; the sequence is KPSSKSNMIRGRNSATSAD. At S40 the chain carries Phosphoserine. One can recognise a Protein kinase domain in the interval 53 to 304; the sequence is YRLLKTIGKG…LEQIMKDRWM (252 aa). T58 carries the post-translational modification Phosphothreonine; by autocatalysis. ATP is bound by residues 59-67 and K82; that span reads IGKGNFAKV. Residues S91, S92, and S93 each carry the phosphoserine; by CaMK1 modification. D175 serves as the catalytic Proton acceptor. T208 is modified (phosphothreonine; by LKB1 and TAOK1). S212 is subject to Phosphoserine; by GSK3-beta. S274 is subject to Phosphoserine; by autocatalysis. T275 carries the post-translational modification Phosphothreonine; by autocatalysis. T294 bears the Phosphothreonine; by CaMK1 mark. Residues 323 to 362 enclose the UBA domain; the sequence is YKDPRRTELMVSMGYTREEIQDSLVGQRYNEVMATYLLLG. Residues 373-632 are disordered; the sequence is ITLKPRPSAD…HSQGRRGASG (260 aa). 2 positions are modified to phosphoserine: K376 and S409. Polar residues predominate over residues 418–432; sequence PTSNSYSKKTQSNNA. A compositionally biased stretch (basic and acidic residues) spans 433-445; the sequence is ENKRPEEDRESGR. The residue at position 456 (S456) is a Phosphoserine. At T467 the chain carries Phosphothreonine. Polar residues predominate over residues 467-486; it reads TPTPSTNSVLSTSTNRSRNS. S486 and S493 each carry phosphoserine. The span at 495-504 shows a compositional bias: polar residues; it reads GQASIQNGKD. Over residues 511-525 the composition is skewed to low complexity; that stretch reads SRASTASASAAVSAA. A phosphoserine mark is found at S569, S571, and S592. Phosphothreonine; by PKC/PRKCZ is present on T596. Residues S619 and S722 each carry the phosphoserine modification. The 50-residue stretch at 739–788 folds into the KA1 domain; the sequence is TPGHEDFVQWEMEVCKLPRLSLNGVRFKRISGTSMAFKNIASKIANELKL.

This sequence belongs to the protein kinase superfamily. CAMK Ser/Thr protein kinase family. SNF1 subfamily. In terms of assembly, homodimer. Interacts with PAK5; leading to inhibit the protein kinase activity. Interacts with MAPT/TAU. Interacts with MTCL1 isoform 1; the interaction is direct and increases MARK2 microtubule-binding ability. Interacts (when phosphorylated at Thr-596) with YWHAZ. Interacts with YWHAB, YWHAG and YWHAQ. (Microbial infection) In case of infection, interacts with H.pylori CagA, leading to inhibit kinase activity and junctional and polarity defects. The cofactor is Mg(2+). Autophosphorylated. Phosphorylated at Thr-208 by STK11/LKB1 in complex with STE20-related adapter-alpha (STRADA) pseudo kinase and CAB39. Phosphorylation at Thr-208 by TAOK1 activates the kinase activity, leading to phosphorylation and detachment of MAPT/TAU from microtubules. Phosphorylation at Ser-212 by GSK3-beta (GSK3B) inhibits the kinase activity. Phosphorylation by CaMK1 promotes activity and is required to promote neurite outgrowth. Phosphorylation at Thr-596 by PRKCZ/aPKC in polarized epithelial cells inhibits the kinase activity and promotes binding to 14-3-3 protein YWHAZ, leading to relocation from cell membrane to cytoplasm. High levels of expression in heart, brain, skeletal muscle and pancreas, lower levels observed in lung, liver and kidney.

The protein resides in the cell membrane. The protein localises to the cytoplasm. Its subcellular location is the lateral cell membrane. It is found in the cytoskeleton. It localises to the cell projection. The protein resides in the dendrite. It catalyses the reaction L-seryl-[protein] + ATP = O-phospho-L-seryl-[protein] + ADP + H(+). The enzyme catalyses L-threonyl-[protein] + ATP = O-phospho-L-threonyl-[protein] + ADP + H(+). The catalysed reaction is L-seryl-[tau protein] + ATP = O-phospho-L-seryl-[tau protein] + ADP + H(+). It carries out the reaction L-threonyl-[tau protein] + ATP = O-phospho-L-threonyl-[tau protein] + ADP + H(+). Its activity is regulated as follows. Inhibited by PAK5; inhibition is independent of the kinase activity of PAK5. Activated by phosphorylation on Thr-208. Inhibited by phosphorylation at Ser-212 and Thr-596. Inhibited by hymenialdisine. Specifically inhibited by the H.pylori CagA peptide FPLKRHDKVDDLSK that mimics host substrates and binds to the kinase substrate-binding site. Functionally, serine/threonine-protein kinase. Involved in cell polarity and microtubule dynamics regulation. Phosphorylates CRTC2/TORC2, DCX, HDAC7, KIF13B, MAP2, MAP4 and RAB11FIP2. Phosphorylates the microtubule-associated protein MAPT/TAU. Plays a key role in cell polarity by phosphorylating the microtubule-associated proteins MAP2, MAP4 and MAPT/TAU at KXGS motifs, causing detachment from microtubules, and their disassembly. Regulates epithelial cell polarity by phosphorylating RAB11FIP2. Involved in the regulation of neuronal migration through its dual activities in regulating cellular polarity and microtubule dynamics, possibly by phosphorylating and regulating DCX. Regulates axogenesis by phosphorylating KIF13B, promoting interaction between KIF13B and 14-3-3 and inhibiting microtubule-dependent accumulation of KIF13B. Also required for neurite outgrowth and establishment of neuronal polarity. Regulates localization and activity of some histone deacetylases by mediating phosphorylation of HDAC7, promoting subsequent interaction between HDAC7 and 14-3-3 and export from the nucleus. Also acts as a positive regulator of the Wnt signaling pathway, probably by mediating phosphorylation of dishevelled proteins (DVL1, DVL2 and/or DVL3). Modulates the developmental decision to build a columnar versus a hepatic epithelial cell apparently by promoting a switch from a direct to a transcytotic mode of apical protein delivery. Essential for the asymmetric development of membrane domains of polarized epithelial cells. In Homo sapiens (Human), this protein is Serine/threonine-protein kinase MARK2.